A 97-amino-acid polypeptide reads, in one-letter code: Co-chaperonin GroES (97 aa).

The protein belongs to the GroES chaperonin family. As to quaternary structure, heptamer of 7 subunits arranged in a ring. Interacts with the chaperonin GroEL.

It localises to the cytoplasm. In terms of biological role, together with the chaperonin GroEL, plays an essential role in assisting protein folding. The GroEL-GroES system forms a nano-cage that allows encapsulation of the non-native substrate proteins and provides a physical environment optimized to promote and accelerate protein folding. GroES binds to the apical surface of the GroEL ring, thereby capping the opening of the GroEL channel. The sequence is that of Co-chaperonin GroES from Salmonella agona (strain SL483).